We begin with the raw amino-acid sequence, 172 residues long: Large ribosomal subunit protein uL10 (172 aa).

Belongs to the universal ribosomal protein uL10 family. Part of the ribosomal stalk of the 50S ribosomal subunit. The N-terminus interacts with L11 and the large rRNA to form the base of the stalk. The C-terminus forms an elongated spine to which L12 dimers bind in a sequential fashion forming a multimeric L10(L12)X complex.

Forms part of the ribosomal stalk, playing a central role in the interaction of the ribosome with GTP-bound translation factors. The protein is Large ribosomal subunit protein uL10 of Bartonella tribocorum (strain CIP 105476 / IBS 506).